Reading from the N-terminus, the 98-residue chain is Serine rich endogenous peptide 10 (98 aa).

An N-terminal signal peptide occupies residues methionine 1–serine 29. A disordered region spans residues asparagine 50–proline 98. A compositionally biased stretch (polar residues) spans alanine 52–aspartate 61. Short sequence motifs (SCOOP motif) lie at residues alanine 52–serine 66 and aspartate 80–arginine 94. 2 short sequence motifs (sxS motif essential for MIK2 binding) span residues serine 58–serine 60 and serine 86–serine 88. A compositionally biased stretch (gly residues) spans serine 86–proline 98.

The protein belongs to the serine rich endogenous peptide (SCOOP) phytocytokine family. Interacts with MIK2 (via extracellular leucine-rich repeat domain); this interaction triggers the formation of complex between MIK2 and the BAK1/SERK3 and SERK4 coreceptors, and subsequent BAK1 activation by phosphorylation. In terms of tissue distribution, mostly expressed in leaves and seedlings shoots, to a lower extent, in roots, but barely in flowers.

It is found in the cell membrane. It localises to the secreted. The protein localises to the extracellular space. Its subcellular location is the apoplast. Brassicaceae-specific phytocytokine (plant endogenous peptide released into the apoplast) perceived by MIK2 in a BAK1/SERK3 and SERK4 coreceptors-dependent manner, that modulates various physiological and antimicrobial processes including growth prevention and reactive oxygen species (ROS) response regulation. Inhibits root growth and regulates root meristems. Promotes ROS production and MAPK (e.g. MPK3, MPK4 and MPK6) activation in a MIK2-dependent manner, thus leading to the up-regulation of immune-related marker genes (e.g. WRKY30, WRKY33 and CYP81F2). This chain is Serine rich endogenous peptide 10, found in Arabidopsis thaliana (Mouse-ear cress).